Here is a 488-residue protein sequence, read N- to C-terminus: Protein nucleotidyltransferase YdiU (488 aa).

ATP is bound by residues G91, G93, R94, K114, D126, G127, R177, and R184. D253 acts as the Proton acceptor in catalysis. Mg(2+) contacts are provided by N254 and D263. ATP is bound at residue D263.

The protein belongs to the SELO family. It depends on Mg(2+) as a cofactor. The cofactor is Mn(2+).

It carries out the reaction L-seryl-[protein] + ATP = 3-O-(5'-adenylyl)-L-seryl-[protein] + diphosphate. The catalysed reaction is L-threonyl-[protein] + ATP = 3-O-(5'-adenylyl)-L-threonyl-[protein] + diphosphate. The enzyme catalyses L-tyrosyl-[protein] + ATP = O-(5'-adenylyl)-L-tyrosyl-[protein] + diphosphate. It catalyses the reaction L-histidyl-[protein] + UTP = N(tele)-(5'-uridylyl)-L-histidyl-[protein] + diphosphate. It carries out the reaction L-seryl-[protein] + UTP = O-(5'-uridylyl)-L-seryl-[protein] + diphosphate. The catalysed reaction is L-tyrosyl-[protein] + UTP = O-(5'-uridylyl)-L-tyrosyl-[protein] + diphosphate. Its function is as follows. Nucleotidyltransferase involved in the post-translational modification of proteins. It can catalyze the addition of adenosine monophosphate (AMP) or uridine monophosphate (UMP) to a protein, resulting in modifications known as AMPylation and UMPylation. The sequence is that of Protein nucleotidyltransferase YdiU from Bacillus cereus (strain ATCC 10987 / NRS 248).